Here is a 465-residue protein sequence, read N- to C-terminus: Cysteine--tRNA ligase (465 aa).

Cysteine 27 contributes to the Zn(2+) binding site. The 'HIGH' region signature appears at 29-39 (PTVYDFIHIGN). Residues cysteine 207, histidine 232, and glutamate 236 each coordinate Zn(2+). The 'KMSKS' region motif lies at 264-268 (KMSKS). ATP is bound at residue lysine 267.

It belongs to the class-I aminoacyl-tRNA synthetase family. As to quaternary structure, monomer. Zn(2+) is required as a cofactor.

It is found in the cytoplasm. The enzyme catalyses tRNA(Cys) + L-cysteine + ATP = L-cysteinyl-tRNA(Cys) + AMP + diphosphate. This chain is Cysteine--tRNA ligase, found in Caldicellulosiruptor saccharolyticus (strain ATCC 43494 / DSM 8903 / Tp8T 6331).